Reading from the N-terminus, the 96-residue chain is U6 snRNA-associated Sm-like protein LSm8 (96 aa).

The 76-residue stretch at 1 to 76 folds into the Sm domain; it reads MTSALENYIN…VAVIGEIDEE (76 aa). Thr2 is modified (N-acetylthreonine).

This sequence belongs to the snRNP Sm proteins family. As to quaternary structure, component of the precatalytic spliceosome (spliceosome B complex). Component of the U4/U6-U5 tri-snRNP complex, a building block of the precatalytic spliceosome (spliceosome B complex). The U4/U6-U5 tri-snRNP complex is composed of the U4, U6 and U5 snRNAs and at least PRPF3, PRPF4, PRPF6, PRPF8, PRPF31, SNRNP200, TXNL4A, SNRNP40, SNRPB, SNRPD1, SNRPD2, SNRPD3, SNRPE, SNRPF, SNRPG, DDX23, CD2BP2, PPIH, SNU13, EFTUD2, SART1 and USP39, plus LSM2, LSM3, LSM4, LSM5, LSM6, LSM7 and LSM8. LSM2, LSM3, LSM4, LSM5, LSM6, LSM7 and LSM8 form a heptameric, ring-shaped subcomplex (the LSM2-8 complex) that is part of the U4/U6-U5 tri-snRNP complex and the precatalytic spliceosome.

The protein resides in the nucleus. In terms of biological role, plays a role in pre-mRNA splicing as component of the U4/U6-U5 tri-snRNP complex that is involved in spliceosome assembly, and as component of the precatalytic spliceosome (spliceosome B complex). The heptameric LSM2-8 complex binds specifically to the 3'-terminal U-tract of U6 snRNA. The sequence is that of U6 snRNA-associated Sm-like protein LSm8 (LSM8) from Bos taurus (Bovine).